We begin with the raw amino-acid sequence, 508 residues long: Photosystem II CP47 reaction center protein (508 aa).

Helical transmembrane passes span 21 to 36 (AVHI…WAGS), 101 to 115 (IVFS…IWHW), 140 to 156 (GIHL…FGTF), 203 to 218 (IAAG…FHLS), 237 to 252 (VLSS…AFVV), and 457 to 472 (SFAL…HGAR).

It belongs to the PsbB/PsbC family. PsbB subfamily. As to quaternary structure, PSII is composed of 1 copy each of membrane proteins PsbA, PsbB, PsbC, PsbD, PsbE, PsbF, PsbH, PsbI, PsbJ, PsbK, PsbL, PsbM, PsbT, PsbX, PsbY, PsbZ, Psb30/Ycf12, at least 3 peripheral proteins of the oxygen-evolving complex and a large number of cofactors. It forms dimeric complexes. It depends on Binds multiple chlorophylls. PSII binds additional chlorophylls, carotenoids and specific lipids. as a cofactor.

It localises to the plastid. The protein localises to the chloroplast thylakoid membrane. Its function is as follows. One of the components of the core complex of photosystem II (PSII). It binds chlorophyll and helps catalyze the primary light-induced photochemical processes of PSII. PSII is a light-driven water:plastoquinone oxidoreductase, using light energy to abstract electrons from H(2)O, generating O(2) and a proton gradient subsequently used for ATP formation. The sequence is that of Photosystem II CP47 reaction center protein from Citrus sinensis (Sweet orange).